Here is a 256-residue protein sequence, read N- to C-terminus: RNA polymerase sigma factor SigI1 (256 aa).

The Polymerase core binding signature appears at 67–80 (DEFSIALSAFNEAI). Residues 205 to 224 (RNELKKKAKVHGRTIGNNRK) constitute a DNA-binding region (H-T-H motif).

The protein belongs to the sigma-70 factor family. SigI subfamily. Interacts with RsgI1.

The protein resides in the cytoplasm. Negatively regulated by the anti-sigma-I factor RsgI1. Binding of the polysaccharide substrate to RsgI1 may lead to the release and activation of SigI1. Its function is as follows. Sigma factors are initiation factors that promote the attachment of RNA polymerase to specific initiation sites and are then released. This sigma factor is involved in regulation of cellulosomal genes via an external polysaccharide-sensing mechanism. SigI1 promotes transcription from sigI1 and celS promoters. In Acetivibrio thermocellus (strain ATCC 27405 / DSM 1237 / JCM 9322 / NBRC 103400 / NCIMB 10682 / NRRL B-4536 / VPI 7372) (Clostridium thermocellum), this protein is RNA polymerase sigma factor SigI1.